The primary structure comprises 106 residues: Iron-sulfur cluster assembly protein CyaY (106 aa).

It belongs to the frataxin family.

Involved in iron-sulfur (Fe-S) cluster assembly. May act as a regulator of Fe-S biogenesis. The chain is Iron-sulfur cluster assembly protein CyaY from Escherichia coli O6:H1 (strain CFT073 / ATCC 700928 / UPEC).